Here is a 124-residue protein sequence, read N- to C-terminus: Ragulator complex protein LAMTOR2 homolog (124 aa).

The protein belongs to the GAMAD family. Part of the Ragulator complex.

Regulator of the TOR pathway, a signaling cascade that promotes cell growth in response to growth factors, energy levels, and amino acids. May activate the TOR signaling cascade in response to amino acids. The sequence is that of Ragulator complex protein LAMTOR2 homolog from Caenorhabditis elegans.